A 209-amino-acid polypeptide reads, in one-letter code: Amelotin (209 aa).

The N-terminal stretch at 1–16 is a signal peptide; sequence MRSTILLFCLLGSTRS. The segment at 142–209 is disordered; sequence AGANPDVQDG…ATTESANGIQ (68 aa).

The protein belongs to the amelotin family. Post-translationally, phosphorylated by FAM20C in vitro. O-glycosylated.

It is found in the secreted. Its function is as follows. Is a promoter of calcium phosphate mineralization, playing a critical role in the formation of the compact, mineralized, aprismatic enamel surface layer during the maturation stage of amelogenesis. This Homo sapiens (Human) protein is Amelotin (AMTN).